The sequence spans 267 residues: NAD kinase 2 (267 aa).

The Proton acceptor role is filled by Asp52. Residues Asp52–Ala53, Asn124–Glu125, Arg151, Asp153, Thr164–Ser169, and Ala188 each bind NAD(+).

This sequence belongs to the NAD kinase family. Requires a divalent metal cation as cofactor.

The protein localises to the cytoplasm. The catalysed reaction is NAD(+) + ATP = ADP + NADP(+) + H(+). Its function is as follows. Involved in the regulation of the intracellular balance of NAD and NADP, and is a key enzyme in the biosynthesis of NADP. Catalyzes specifically the phosphorylation on 2'-hydroxyl of the adenosine moiety of NAD to yield NADP. The sequence is that of NAD kinase 2 from Bacillus cereus (strain ATCC 14579 / DSM 31 / CCUG 7414 / JCM 2152 / NBRC 15305 / NCIMB 9373 / NCTC 2599 / NRRL B-3711).